The following is a 498-amino-acid chain: ATP synthase subunit beta, chloroplastic (498 aa).

172–179 (GGAGVGKT) contacts ATP.

The protein belongs to the ATPase alpha/beta chains family. As to quaternary structure, F-type ATPases have 2 components, CF(1) - the catalytic core - and CF(0) - the membrane proton channel. CF(1) has five subunits: alpha(3), beta(3), gamma(1), delta(1), epsilon(1). CF(0) has four main subunits: a(1), b(1), b'(1) and c(9-12).

The protein localises to the plastid. It localises to the chloroplast thylakoid membrane. It carries out the reaction ATP + H2O + 4 H(+)(in) = ADP + phosphate + 5 H(+)(out). Its function is as follows. Produces ATP from ADP in the presence of a proton gradient across the membrane. The catalytic sites are hosted primarily by the beta subunits. This is ATP synthase subunit beta, chloroplastic from Castanea sativa (Sweet chestnut).